Reading from the N-terminus, the 220-residue chain is 7-cyano-7-deazaguanine synthase (220 aa).

10–20 contributes to the ATP binding site; it reads FSGGQDSTTCL. The Zn(2+) site is built by Cys-186, Cys-195, Cys-198, and Cys-201.

Belongs to the QueC family. Homodimer. Zn(2+) is required as a cofactor.

The catalysed reaction is 7-carboxy-7-deazaguanine + NH4(+) + ATP = 7-cyano-7-deazaguanine + ADP + phosphate + H2O + H(+). Its pathway is purine metabolism; 7-cyano-7-deazaguanine biosynthesis. Its function is as follows. Catalyzes the ATP-dependent conversion of 7-carboxy-7-deazaguanine (CDG) to 7-cyano-7-deazaguanine (preQ(0)). This is 7-cyano-7-deazaguanine synthase from Bacillus thuringiensis (strain Al Hakam).